A 198-amino-acid chain; its full sequence is Protein GrpE (198 aa).

Basic and acidic residues predominate over residues 1–21 (MMKKAEDPLQDREGTIQEHTE). The interval 1-56 (MMKKAEDPLQDREGTIQEHTEGQAGTAAADQSAAVETPESRIAGLEREVQAEKEQN) is disordered. Over residues 22-34 (GQAGTAAADQSAA) the composition is skewed to low complexity. Residues 44–56 (GLEREVQAEKEQN) are compositionally biased toward basic and acidic residues.

This sequence belongs to the GrpE family. In terms of assembly, homodimer.

The protein localises to the cytoplasm. In terms of biological role, participates actively in the response to hyperosmotic and heat shock by preventing the aggregation of stress-denatured proteins, in association with DnaK and GrpE. It is the nucleotide exchange factor for DnaK and may function as a thermosensor. Unfolded proteins bind initially to DnaJ; upon interaction with the DnaJ-bound protein, DnaK hydrolyzes its bound ATP, resulting in the formation of a stable complex. GrpE releases ADP from DnaK; ATP binding to DnaK triggers the release of the substrate protein, thus completing the reaction cycle. Several rounds of ATP-dependent interactions between DnaJ, DnaK and GrpE are required for fully efficient folding. In Chlorobium luteolum (strain DSM 273 / BCRC 81028 / 2530) (Pelodictyon luteolum), this protein is Protein GrpE.